Consider the following 31-residue polypeptide: Photosystem II reaction center protein T (31 aa).

A helical transmembrane segment spans residues 3–23 (ALVYTFLLIGTLGIIFFAIFF).

Belongs to the PsbT family. In terms of assembly, PSII is composed of 1 copy each of membrane proteins PsbA, PsbB, PsbC, PsbD, PsbE, PsbF, PsbH, PsbI, PsbJ, PsbK, PsbL, PsbM, PsbT, PsbY, PsbZ, Psb30/Ycf12, at least 3 peripheral proteins of the oxygen-evolving complex and a large number of cofactors. It forms dimeric complexes.

It localises to the plastid. The protein localises to the chloroplast thylakoid membrane. Found at the monomer-monomer interface of the photosystem II (PS II) dimer, plays a role in assembly and dimerization of PSII. PSII is a light-driven water plastoquinone oxidoreductase, using light energy to abstract electrons from H(2)O, generating a proton gradient subsequently used for ATP formation. This Tetradesmus obliquus (Green alga) protein is Photosystem II reaction center protein T.